Reading from the N-terminus, the 302-residue chain is Recombination-associated protein RdgC (302 aa).

It belongs to the RdgC family.

It is found in the cytoplasm. The protein localises to the nucleoid. May be involved in recombination. In Actinobacillus pleuropneumoniae serotype 7 (strain AP76), this protein is Recombination-associated protein RdgC.